The chain runs to 660 residues: Bifunctional polymyxin resistance protein ArnA (660 aa).

Residues 1 to 304 (MKAVIFAYHD…TLGLVAGARL (304 aa)) form a formyltransferase ArnAFT region. The Proton donor; for formyltransferase activity role is filled by His104. (6R)-10-formyltetrahydrofolate contacts are provided by residues Arg114 and 136–140 (VKRAD). The interval 314–660 (RRIRVLILGV…RSVDVAERAS (347 aa)) is dehydrogenase ArnADH. Residues Asp347 and 368 to 369 (DI) contribute to the NAD(+) site. Residues Ala393, Tyr398, and 432 to 433 (TS) each bind UDP-alpha-D-glucuronate. Residue Glu434 is the Proton acceptor; for decarboxylase activity of the active site. Residues Arg460, Asn492, 526–535 (KLIDGGQQKR), and Tyr613 contribute to the UDP-alpha-D-glucuronate site. The Proton donor; for decarboxylase activity role is filled by Arg619.

It in the N-terminal section; belongs to the Fmt family. UDP-L-Ara4N formyltransferase subfamily. This sequence in the C-terminal section; belongs to the NAD(P)-dependent epimerase/dehydratase family. UDP-glucuronic acid decarboxylase subfamily. As to quaternary structure, homohexamer, formed by a dimer of trimers.

The catalysed reaction is UDP-alpha-D-glucuronate + NAD(+) = UDP-beta-L-threo-pentopyranos-4-ulose + CO2 + NADH. It catalyses the reaction UDP-4-amino-4-deoxy-beta-L-arabinose + (6R)-10-formyltetrahydrofolate = UDP-4-deoxy-4-formamido-beta-L-arabinose + (6S)-5,6,7,8-tetrahydrofolate + H(+). The protein operates within nucleotide-sugar biosynthesis; UDP-4-deoxy-4-formamido-beta-L-arabinose biosynthesis; UDP-4-deoxy-4-formamido-beta-L-arabinose from UDP-alpha-D-glucuronate: step 1/3. Its pathway is nucleotide-sugar biosynthesis; UDP-4-deoxy-4-formamido-beta-L-arabinose biosynthesis; UDP-4-deoxy-4-formamido-beta-L-arabinose from UDP-alpha-D-glucuronate: step 3/3. It participates in bacterial outer membrane biogenesis; lipopolysaccharide biosynthesis. Bifunctional enzyme that catalyzes the oxidative decarboxylation of UDP-glucuronic acid (UDP-GlcUA) to UDP-4-keto-arabinose (UDP-Ara4O) and the addition of a formyl group to UDP-4-amino-4-deoxy-L-arabinose (UDP-L-Ara4N) to form UDP-L-4-formamido-arabinose (UDP-L-Ara4FN). The modified arabinose is attached to lipid A and is required for resistance to polymyxin and cationic antimicrobial peptides. The polypeptide is Bifunctional polymyxin resistance protein ArnA (Salmonella enteritidis PT4 (strain P125109)).